A 598-amino-acid chain; its full sequence is Eukaryotic translation initiation factor 3 subunit D (598 aa).

Residues 104–178 (VKTRGFGRGG…YDKPQRNRDS (75 aa)) are disordered. Positions 109-132 (FGRGGGTIFRGRGQRGGAQRGRGG) are enriched in gly residues. Residues 165-177 (GWKDYDKPQRNRD) are compositionally biased toward basic and acidic residues. Residues 304–318 (SIDLVTVNENAADAP) form an RNA gate region. Positions 574-598 (NTFEEEDDTGAKAEKDEESEEKDEE) are disordered. The span at 589-598 (DEESEEKDEE) shows a compositional bias: acidic residues.

The protein belongs to the eIF-3 subunit D family. In terms of assembly, component of the eukaryotic translation initiation factor 3 (eIF-3) complex.

Its subcellular location is the cytoplasm. Functionally, mRNA cap-binding component of the eukaryotic translation initiation factor 3 (eIF-3) complex, which is involved in protein synthesis of a specialized repertoire of mRNAs and, together with other initiation factors, stimulates binding of mRNA and methionyl-tRNAi to the 40S ribosome. The eIF-3 complex specifically targets and initiates translation of a subset of mRNAs involved in cell proliferation. In the eIF-3 complex, eif3d specifically recognizes and binds the 7-methylguanosine cap of a subset of mRNAs. The polypeptide is Eukaryotic translation initiation factor 3 subunit D (Coccidioides immitis (strain RS) (Valley fever fungus)).